The primary structure comprises 173 residues: Large ribosomal subunit protein uL15 (173 aa).

Over residues 1–11 (MKLNEIRDNQG) the composition is skewed to basic and acidic residues. The disordered stretch occupies residues 1-50 (MKLNEIRDNQGARKSRVRVGRGIGSGLGKTGGRGQKGQKSRSGVSINGFE). Residues 21-35 (RGIGSGLGKTGGRGQ) show a composition bias toward gly residues.

Belongs to the universal ribosomal protein uL15 family. As to quaternary structure, part of the 50S ribosomal subunit.

Functionally, binds to the 23S rRNA. The polypeptide is Large ribosomal subunit protein uL15 (Rhizorhabdus wittichii (strain DSM 6014 / CCUG 31198 / JCM 15750 / NBRC 105917 / EY 4224 / RW1) (Sphingomonas wittichii)).